The chain runs to 384 residues: Proteinase K (384 aa).

An N-terminal signal peptide occupies residues 1–15 (MRLSVLLSLLPLALG). A propeptide spanning residues 16–105 (APAVEQRSEA…IEQDAVVTIN (90 aa)) is cleaved from the precursor. In terms of domain architecture, Inhibitor I9 spans 39 to 104 (KYIVKFKEGS…YIEQDAVVTI (66 aa)). Positions 112–384 (PWGLARISST…NLLAYNNYQA (273 aa)) constitute a Peptidase S8 domain. Residue Thr-121 coordinates Ca(2+). Cys-139 and Cys-228 are disulfide-bonded. Residues Asp-144 and His-174 each act as charge relay system in the active site. Residues Pro-280, Val-282, and Asp-305 each coordinate Ca(2+). Cysteines 283 and 354 form a disulfide. The Charge relay system role is filled by Ser-329. Asp-365 contributes to the Ca(2+) binding site.

Belongs to the peptidase S8 family. The cofactor is Ca(2+).

The enzyme catalyses Hydrolysis of keratin, and of other proteins with subtilisin-like specificity. Hydrolyzes peptide amides.. In terms of biological role, hydrolyzes keratin at aromatic and hydrophobic residues. The protein is Proteinase K (PROK) of Parengyodontium album (Tritirachium album).